Reading from the N-terminus, the 230-residue chain is Demethylluteothin O-methyltransferase (230 aa).

The protein belongs to the methyltransferase superfamily.

The catalysed reaction is demethylluteothin + S-adenosyl-L-methionine = luteothin + S-adenosyl-L-homocysteine. Its pathway is antibiotic biosynthesis. It functions in the pathway polyketide biosynthesis. Its function is as follows. Methyltransferase involved in the biosynthesis of the antibiotic aureothin, a nitroaryl polyketide metabolite with antifungal, cytotoxic and insecticidal activities. Catalyzes the methylation of demethylluteothin to luteothin (also called deoxyaureothin). Is specific for its gamma-pyrone substrate, and does not act on the alpha-pyrone isomer. The protein is Demethylluteothin O-methyltransferase of Streptomyces thioluteus.